A 343-amino-acid polypeptide reads, in one-letter code: Mesaconyl-CoA hydratase (343 aa).

The 70-residue stretch at 47–116 (SDEFARACGL…STVIGLKENS (70 aa)) folds into the MaoC-like domain. Substrate contacts are provided by residues 60–63 (PVDE), 83–86 (VANL), and 94–96 (LKP).

It catalyses the reaction (2R,3S)-beta-methylmalyl-CoA = 2-methylfumaryl-CoA + H2O. In terms of biological role, involved in the ethylmalonyl-CoA pathway for acetate assimilation. Catalyzes the reversible hydration of mesaconyl-CoA (2-methylfumaryl-CoA) to yield beta-methylmalyl-CoA ((2R,3S)-beta-methylmalyl-CoA). In Cereibacter sphaeroides (strain ATCC 17023 / DSM 158 / JCM 6121 / CCUG 31486 / LMG 2827 / NBRC 12203 / NCIMB 8253 / ATH 2.4.1.) (Rhodobacter sphaeroides), this protein is Mesaconyl-CoA hydratase (mch).